A 305-amino-acid chain; its full sequence is Glycine--tRNA ligase alpha subunit (305 aa).

It belongs to the class-II aminoacyl-tRNA synthetase family. As to quaternary structure, tetramer of two alpha and two beta subunits.

It is found in the cytoplasm. It carries out the reaction tRNA(Gly) + glycine + ATP = glycyl-tRNA(Gly) + AMP + diphosphate. This is Glycine--tRNA ligase alpha subunit from Streptococcus mutans serotype c (strain ATCC 700610 / UA159).